Consider the following 430-residue polypeptide: MIDSAAPPSGFCRDCLKEQAAHSRRCLACGSPRLLRHSELYRLTLAHIDCDAFYASVEKRDNPELADKPVIIGGGKRGVVSTACYIARIHGVRSAMPMFKALEACPQAVVIKPDMEKYVRVGREVRAMMQELTPLVQPLSIDEAFLDLSGTERLHHDPPARTLARFAKRVEQEIGITVSVGLSYCKFLAKVASDLQKPRGFSVIGQAEAADFLKAKPVTLIWGVGKAFAATLERDGIRAIGQLQTMEEADLMRRYGTMGRRLYRLSRGLDERSVEIDGEAKSVSSETTFNDDLARQEDLVAHLRGLSEQVAFRLRKSALAGQTVVLKLKTADFKTRTRNRRLESPTRLADRIFRTGLQLLEKEVDGTKYRLIGIGVSDLVDPDLADPPDLVDPQASRRAAAEDAINRLRDKFGKTSVETGYTFGKGRRGQ.

Residues 45–225 (LAHIDCDAFY…KPVTLIWGVG (181 aa)) form the UmuC domain. Mg(2+)-binding residues include aspartate 49 and aspartate 142. Glutamate 143 is a catalytic residue.

It belongs to the DNA polymerase type-Y family. As to quaternary structure, monomer. Requires Mg(2+) as cofactor.

It is found in the cytoplasm. It carries out the reaction DNA(n) + a 2'-deoxyribonucleoside 5'-triphosphate = DNA(n+1) + diphosphate. Functionally, poorly processive, error-prone DNA polymerase involved in untargeted mutagenesis. Copies undamaged DNA at stalled replication forks, which arise in vivo from mismatched or misaligned primer ends. These misaligned primers can be extended by PolIV. Exhibits no 3'-5' exonuclease (proofreading) activity. May be involved in translesional synthesis, in conjunction with the beta clamp from PolIII. This Rhizobium meliloti (strain 1021) (Ensifer meliloti) protein is DNA polymerase IV 1 (dinB1).